Consider the following 417-residue polypeptide: GTP-binding protein YPT11 (417 aa).

Positions 1–34 are disordered; sequence MSQRKRYSLNVVTSPSIPSPTPSAPIRTNESNWE. GTP is bound by residues 97–104, 228–232, and 292–295; these read GDANVGKT, DTAGQ, and NKID. S-geranylgeranyl cysteine attachment occurs at residues cysteine 415 and cysteine 416.

It belongs to the small GTPase superfamily. Rab family. As to quaternary structure, interacts with MYO2 (via C-terminal tail domain). Interacts with YIF1, YIP3, YIP4 and YIP5.

The protein resides in the endoplasmic reticulum membrane. Its subcellular location is the bud tip. The protein localises to the bud neck. Its function is as follows. Involved in the positive control of both endoplasmic reticulum (ER) and mitochondrion inheritance during cell divison. Required for the MYO2-dependent retention of newly inherited mitochondria at the bud tip in developing daughter cells. In Saccharomyces cerevisiae (strain AWRI1631) (Baker's yeast), this protein is GTP-binding protein YPT11 (YPT11).